The primary structure comprises 285 residues: NAD kinase (285 aa).

Catalysis depends on aspartate 64, which acts as the Proton acceptor. NAD(+) is bound by residues 64–65 (DG), 140–141 (ND), arginine 151, arginine 168, aspartate 170, and 181–186 (TGYNLS).

It belongs to the NAD kinase family. A divalent metal cation serves as cofactor.

It is found in the cytoplasm. The enzyme catalyses NAD(+) + ATP = ADP + NADP(+) + H(+). In terms of biological role, involved in the regulation of the intracellular balance of NAD and NADP, and is a key enzyme in the biosynthesis of NADP. Catalyzes specifically the phosphorylation on 2'-hydroxyl of the adenosine moiety of NAD to yield NADP. The polypeptide is NAD kinase (Lachnoclostridium phytofermentans (strain ATCC 700394 / DSM 18823 / ISDg) (Clostridium phytofermentans)).